A 67-amino-acid chain; its full sequence is Small ribosomal subunit protein bS21 (67 aa).

This sequence belongs to the bacterial ribosomal protein bS21 family.

The chain is Small ribosomal subunit protein bS21 from Magnetococcus marinus (strain ATCC BAA-1437 / JCM 17883 / MC-1).